The chain runs to 156 residues: ATP synthase subunit b (156 aa).

A helical transmembrane segment spans residues 7 to 27 (LFAQMIVFFVLWWVVARFVWP).

This sequence belongs to the ATPase B chain family. F-type ATPases have 2 components, F(1) - the catalytic core - and F(0) - the membrane proton channel. F(1) has five subunits: alpha(3), beta(3), gamma(1), delta(1), epsilon(1). F(0) has three main subunits: a(1), b(2) and c(10-14). The alpha and beta chains form an alternating ring which encloses part of the gamma chain. F(1) is attached to F(0) by a central stalk formed by the gamma and epsilon chains, while a peripheral stalk is formed by the delta and b chains.

It localises to the cell inner membrane. F(1)F(0) ATP synthase produces ATP from ADP in the presence of a proton or sodium gradient. F-type ATPases consist of two structural domains, F(1) containing the extramembraneous catalytic core and F(0) containing the membrane proton channel, linked together by a central stalk and a peripheral stalk. During catalysis, ATP synthesis in the catalytic domain of F(1) is coupled via a rotary mechanism of the central stalk subunits to proton translocation. Functionally, component of the F(0) channel, it forms part of the peripheral stalk, linking F(1) to F(0). In Polynucleobacter necessarius subsp. necessarius (strain STIR1), this protein is ATP synthase subunit b.